The following is a 703-amino-acid chain: Elongation factor G (703 aa).

A tr-type G domain is found at 8 to 290 (ARYRNIGICA…AVIEYLPAPT (283 aa)). Residues 17-24 (AHVDAGKT), 88-92 (DTPGH), and 142-145 (NKMD) contribute to the GTP site.

It belongs to the TRAFAC class translation factor GTPase superfamily. Classic translation factor GTPase family. EF-G/EF-2 subfamily.

The protein localises to the cytoplasm. In terms of biological role, catalyzes the GTP-dependent ribosomal translocation step during translation elongation. During this step, the ribosome changes from the pre-translocational (PRE) to the post-translocational (POST) state as the newly formed A-site-bound peptidyl-tRNA and P-site-bound deacylated tRNA move to the P and E sites, respectively. Catalyzes the coordinated movement of the two tRNA molecules, the mRNA and conformational changes in the ribosome. In Teredinibacter turnerae (strain ATCC 39867 / T7901), this protein is Elongation factor G.